The following is a 500-amino-acid chain: Inner membrane transporter YjeM (500 aa).

Over 1–7 (MPHTIKK) the chain is Cytoplasmic. The chain crosses the membrane as a helical span at residues 8–28 (MSLIGLILMIFTSVFGFANSP). The Periplasmic portion of the chain corresponds to 29-37 (SAYYLMGYS). Residues 38 to 58 (AIPFYIFSALLFFIPFALMMA) traverse the membrane as a helical segment. Residues 59-82 (EMGAAYRKEEGGIYSWMNNSVGPR) are Cytoplasmic-facing. A helical transmembrane segment spans residues 83–103 (FAFIGTFMWFSSYIIWMVSTS). The Periplasmic segment spans residues 104-132 (AKVWVPFSTFLYGSDMTQHWRIAGLEPTQ). Residues 133-153 (VVGLLAVAWMILVTVVASKGI) form a helical membrane-spanning segment. Topologically, residues 154-163 (NKIARITAVG) are cytoplasmic. Residues 164 to 184 (GIAVMCLNLVLLLVSITILLL) traverse the membrane as a helical segment. The Periplasmic portion of the chain corresponds to 185-209 (NGGHFAQDINFLASPNPGYQSGLAM). A helical membrane pass occupies residues 210 to 230 (LSFVVFAIFAYGGIEAVGGLV). At 231 to 243 (DKTENPEKNFAKG) the chain is on the cytoplasmic side. The chain crosses the membrane as a helical span at residues 244 to 264 (IVFAAIVISIGYSLAIFLWGV). The Periplasmic segment spans residues 265-319 (STNWQQVLSNGSVNLGNITYVLMKSLGMTLGNALHLSPEASLSLGVWFARITGLS). Residues 320-340 (MFLAYTGAFFTLCYSPLKAII) form a helical membrane-spanning segment. Residues 341–369 (QGTPKALWPEPMTRLNAMGMPSIAMWMQC) lie on the Cytoplasmic side of the membrane. The helical transmembrane segment at 370–390 (GLVTVFILLVSFGGGTASAFF) threads the bilayer. At 391–394 (NKLT) the chain is on the periplasmic side. Residues 395-415 (LMANVSMTLPYLFLALAFPFF) form a helical membrane-spanning segment. The Cytoplasmic segment spans residues 416 to 433 (KARQDLDRPFVIFKTHLS). Residues 434–454 (AMIATVVVVLVVTFANVFTII) traverse the membrane as a helical segment. Topologically, residues 455–462 (QPVVEAGD) are periplasmic. The chain crosses the membrane as a helical span at residues 463–483 (WDSTLWMIGGPVFFSLLAMAI). Over 484–500 (YQNYCSRVAKNPQWAVE) the chain is Cytoplasmic.

This sequence belongs to the amino acid-polyamine-organocation (APC) superfamily.

It localises to the cell inner membrane. The protein is Inner membrane transporter YjeM (yjeM) of Escherichia coli (strain K12).